Reading from the N-terminus, the 369-residue chain is UDP-N-acetylenolpyruvoylglucosamine reductase (369 aa).

The region spanning 29-202 (VGPIARRVIT…LEVEFALDPS (174 aa)) is the FAD-binding PCMH-type domain. R176 is a catalytic residue. S257 acts as the Proton donor in catalysis. The active site involves E361.

It belongs to the MurB family. The cofactor is FAD.

The protein localises to the cytoplasm. The enzyme catalyses UDP-N-acetyl-alpha-D-muramate + NADP(+) = UDP-N-acetyl-3-O-(1-carboxyvinyl)-alpha-D-glucosamine + NADPH + H(+). It participates in cell wall biogenesis; peptidoglycan biosynthesis. Its function is as follows. Cell wall formation. The protein is UDP-N-acetylenolpyruvoylglucosamine reductase of Mycobacterium tuberculosis (strain ATCC 25177 / H37Ra).